Consider the following 358-residue polypeptide: Phosphoribosyl pyrophosphate synthase-associated protein 2 (358 aa).

The protein belongs to the ribose-phosphate pyrophosphokinase family.

Seems to play a negative regulatory role in 5-phosphoribose 1-diphosphate synthesis. This chain is Phosphoribosyl pyrophosphate synthase-associated protein 2 (prpsap2), found in Xenopus tropicalis (Western clawed frog).